The primary structure comprises 255 residues: Imidazole glycerol phosphate synthase subunit HisF (255 aa).

Catalysis depends on residues D11 and D130.

This sequence belongs to the HisA/HisF family. As to quaternary structure, heterodimer of HisH and HisF.

It is found in the cytoplasm. The catalysed reaction is 5-[(5-phospho-1-deoxy-D-ribulos-1-ylimino)methylamino]-1-(5-phospho-beta-D-ribosyl)imidazole-4-carboxamide + L-glutamine = D-erythro-1-(imidazol-4-yl)glycerol 3-phosphate + 5-amino-1-(5-phospho-beta-D-ribosyl)imidazole-4-carboxamide + L-glutamate + H(+). The protein operates within amino-acid biosynthesis; L-histidine biosynthesis; L-histidine from 5-phospho-alpha-D-ribose 1-diphosphate: step 5/9. IGPS catalyzes the conversion of PRFAR and glutamine to IGP, AICAR and glutamate. The HisF subunit catalyzes the cyclization activity that produces IGP and AICAR from PRFAR using the ammonia provided by the HisH subunit. The polypeptide is Imidazole glycerol phosphate synthase subunit HisF (Akkermansia muciniphila (strain ATCC BAA-835 / DSM 22959 / JCM 33894 / BCRC 81048 / CCUG 64013 / CIP 107961 / Muc)).